The chain runs to 154 residues: Large ribosomal subunit protein uL13 (154 aa).

Residues 129 to 154 (SQHPHEAQQPEALDVGTLNRKNKRIA) are disordered.

This sequence belongs to the universal ribosomal protein uL13 family. As to quaternary structure, part of the 50S ribosomal subunit.

This protein is one of the early assembly proteins of the 50S ribosomal subunit, although it is not seen to bind rRNA by itself. It is important during the early stages of 50S assembly. The protein is Large ribosomal subunit protein uL13 of Bartonella bacilliformis (strain ATCC 35685 / KC583 / Herrer 020/F12,63).